A 1053-amino-acid chain; its full sequence is DIS3-like exonuclease 1 (1053 aa).

Positions 236–310 (AGIKSGRYIQ…KSEWKGRTAA (75 aa)) constitute a CSD1 domain. The interval 306 to 332 (GRTAALGENDSDDKASGESPSEPMPTG) is disordered. The region spanning 365–431 (ILVTPWDYRI…GEIATILVEN (67 aa)) is the CSD2 domain. An RNB domain is found at 465-816 (RKDLRTTHLV…VHRLLMAAIS (352 aa)). Ser989 bears the Phosphoserine mark.

This sequence belongs to the RNR ribonuclease family. As to quaternary structure, component of the RNA exosome complex. The catalytically inactive RNA exosome core (Exo-9) complex is believed to associate with catalytic subunits EXOSC10, and DIS3 or DIS3L in cytoplasmic- and nuclear-specific RNA exosome complex forms. Mg(2+) serves as cofactor.

The protein localises to the cytoplasm. The catalysed reaction is Exonucleolytic cleavage in the 3'- to 5'-direction to yield nucleoside 5'-phosphates.. Functionally, catalytic component of the RNA exosome complex which has 3'-&gt;5' exoribonuclease activity and participates in a multitude of cellular RNA processing and degradation events. In the cytoplasm, the RNA exosome complex is involved in general mRNA turnover and specifically degrades inherently unstable mRNAs containing AU-rich elements (AREs) within their 3' untranslated regions, and in RNA surveillance pathways, preventing translation of aberrant mRNAs. It seems to be involved in degradation of histone mRNA. The sequence is that of DIS3-like exonuclease 1 (Dis3l) from Mus musculus (Mouse).